Here is a 192-residue protein sequence, read N- to C-terminus: Segregation and condensation protein B (192 aa).

It belongs to the ScpB family. As to quaternary structure, homodimer. Homodimerization may be required to stabilize the binding of ScpA to the Smc head domains. Component of a cohesin-like complex composed of ScpA, ScpB and the Smc homodimer, in which ScpA and ScpB bind to the head domain of Smc. The presence of the three proteins is required for the association of the complex with DNA.

Its subcellular location is the cytoplasm. Participates in chromosomal partition during cell division. May act via the formation of a condensin-like complex containing Smc and ScpA that pull DNA away from mid-cell into both cell halves. In Oceanobacillus iheyensis (strain DSM 14371 / CIP 107618 / JCM 11309 / KCTC 3954 / HTE831), this protein is Segregation and condensation protein B.